The chain runs to 252 residues: Chitooligosaccharide deacetylase (252 aa).

Residues His61 and His125 each coordinate Mg(2+).

It belongs to the YdjC deacetylase family. ChbG subfamily. As to quaternary structure, homodimer. It depends on Mg(2+) as a cofactor.

The protein localises to the cytoplasm. It carries out the reaction N,N'-diacetylchitobiose + H2O = N-acetyl-beta-D-glucosaminyl-(1-&gt;4)-D-glucosamine + acetate. The catalysed reaction is diacetylchitobiose-6'-phosphate + H2O = N'-monoacetylchitobiose-6'-phosphate + acetate. The protein operates within glycan degradation; chitin degradation. In terms of biological role, involved in the degradation of chitin. ChbG is essential for growth on the acetylated chitooligosaccharides chitobiose and chitotriose but is dispensable for growth on cellobiose and chitosan dimer, the deacetylated form of chitobiose. Deacetylation of chitobiose-6-P and chitotriose-6-P is necessary for both the activation of the chb promoter by the regulatory protein ChbR and the hydrolysis of phosphorylated beta-glucosides by the phospho-beta-glucosidase ChbF. Catalyzes the removal of only one acetyl group from chitobiose-6-P to yield monoacetylchitobiose-6-P, the inducer of ChbR and the substrate of ChbF. This is Chitooligosaccharide deacetylase from Salmonella typhimurium (strain LT2 / SGSC1412 / ATCC 700720).